A 267-amino-acid polypeptide reads, in one-letter code: Apolipoprotein A-I (267 aa).

The signal sequence occupies residues 1-18; it reads MKAAVLTLAVLFLTGSQA. 2 repeat units span residues 68 to 89 and 90 to 111. The 10 X approximate tandem repeats stretch occupies residues 68-267; the sequence is LKLLDNWDSV…EEYTKKLNTQ (200 aa). Position 110 is a methionine sulfoxide (Met110). Residues 112-122 form a 3; half-length repeat; it reads KDLEEVKAKVQ. Tandem repeats lie at residues 123–144, 145–166, 167–188, 189–210, and 211–232. Met136 carries the methionine sulfoxide modification. The 9; half-length repeat unit spans residues 233 to 243; that stretch reads PALEDLRQGLL. Residues 244–267 form repeat 10; the sequence is PVLESFKVSFLSALEEYTKKLNTQ.

This sequence belongs to the apolipoprotein A1/A4/E family. In terms of assembly, homodimer. Interacts with APOA1BP and CLU. Component of a sperm activating protein complex (SPAP), consisting of APOA1, an immunoglobulin heavy chain, an immunoglobulin light chain and albumin. Interacts with NDRG1. Interacts with SCGB3A2. Interacts with NAXE and YJEFN3. Glycosylated. Post-translationally, palmitoylated. In terms of processing, phosphorylation sites are present in the extracellular medium. As to expression, major protein of plasma HDL, also found in chylomicrons.

The protein localises to the secreted. Functionally, participates in the reverse transport of cholesterol from tissues to the liver for excretion by promoting cholesterol efflux from tissues and by acting as a cofactor for the lecithin cholesterol acyltransferase (LCAT). As part of the SPAP complex, activates spermatozoa motility. In Pan paniscus (Pygmy chimpanzee), this protein is Apolipoprotein A-I (APOA1).